Here is a 201-residue protein sequence, read N- to C-terminus: Small ribosomal subunit protein uS4 (201 aa).

Residues 91–155 (SRLDNVVYRA…STLPFQVARE (65 aa)) form the S4 RNA-binding domain.

This sequence belongs to the universal ribosomal protein uS4 family. In terms of assembly, part of the 30S ribosomal subunit. Contacts protein S5. The interaction surface between S4 and S5 is involved in control of translational fidelity.

Its function is as follows. One of the primary rRNA binding proteins, it binds directly to 16S rRNA where it nucleates assembly of the body of the 30S subunit. With S5 and S12 plays an important role in translational accuracy. The protein is Small ribosomal subunit protein uS4 of Rhodococcus jostii (strain RHA1).